Reading from the N-terminus, the 244-residue chain is 5-oxoprolinase subunit A (244 aa).

This sequence belongs to the LamB/PxpA family. Forms a complex composed of PxpA, PxpB and PxpC.

The catalysed reaction is 5-oxo-L-proline + ATP + 2 H2O = L-glutamate + ADP + phosphate + H(+). Its function is as follows. Catalyzes the cleavage of 5-oxoproline to form L-glutamate coupled to the hydrolysis of ATP to ADP and inorganic phosphate. In Shigella sonnei (strain Ss046), this protein is 5-oxoprolinase subunit A.